We begin with the raw amino-acid sequence, 433 residues long: Gamma-glutamyl phosphate reductase 1 (433 aa).

This sequence belongs to the gamma-glutamyl phosphate reductase family.

Its subcellular location is the cytoplasm. The enzyme catalyses L-glutamate 5-semialdehyde + phosphate + NADP(+) = L-glutamyl 5-phosphate + NADPH + H(+). It functions in the pathway amino-acid biosynthesis; L-proline biosynthesis; L-glutamate 5-semialdehyde from L-glutamate: step 2/2. Functionally, catalyzes the NADPH-dependent reduction of L-glutamate 5-phosphate into L-glutamate 5-semialdehyde and phosphate. The product spontaneously undergoes cyclization to form 1-pyrroline-5-carboxylate. This chain is Gamma-glutamyl phosphate reductase 1, found in Synechocystis sp. (strain ATCC 27184 / PCC 6803 / Kazusa).